A 328-amino-acid chain; its full sequence is MEKFLKYEIKVNNNQPTNTNPNYGIFEVAPLESGFGITIGNAMRRVLLSCIPGASVFAIAISGVKQEFSNVEGVLEDVTEMVLNFKQLVVRISDLLFEDGEMIEPPLERWPVLKVTAEKKGAVYAKDLECPAGFEVINKDLYLFSLQKDMKLTVSVYVKQGRGFTSFLENRELINSLGIIATDANFSPVLHCGYEVQEVKTSKQKLTDHLTFKIATNGAIKAVDAFAMAAKILIEHLNPIVSVNESIKNLTIIQEKAEERKVKSFAKQIEELDFTVRTFNCLKRSGIHTLQELLSKSLTDIREIRNLGKKSEREIIKKVQELGLKFRS.

Residues 1 to 244 are alpha N-terminal domain (alpha-NTD); that stretch reads MEKFLKYEIK…EHLNPIVSVN (244 aa). The tract at residues 261–328 is alpha C-terminal domain (alpha-CTD); the sequence is KVKSFAKQIE…VQELGLKFRS (68 aa).

Belongs to the RNA polymerase alpha chain family. In terms of assembly, homodimer. The RNAP catalytic core consists of 2 alpha, 1 beta, 1 beta' and 1 omega subunit. When a sigma factor is associated with the core the holoenzyme is formed, which can initiate transcription.

The catalysed reaction is RNA(n) + a ribonucleoside 5'-triphosphate = RNA(n+1) + diphosphate. Its function is as follows. DNA-dependent RNA polymerase catalyzes the transcription of DNA into RNA using the four ribonucleoside triphosphates as substrates. The sequence is that of DNA-directed RNA polymerase subunit alpha from Mycoplasma genitalium (strain ATCC 33530 / DSM 19775 / NCTC 10195 / G37) (Mycoplasmoides genitalium).